Consider the following 468-residue polypeptide: ATP synthase subunit beta (468 aa).

Residue 148–155 (GGAGVGKT) coordinates ATP.

It belongs to the ATPase alpha/beta chains family. In terms of assembly, F-type ATPases have 2 components, CF(1) - the catalytic core - and CF(0) - the membrane proton channel. CF(1) has five subunits: alpha(3), beta(3), gamma(1), delta(1), epsilon(1). CF(0) has three main subunits: a(1), b(2) and c(9-12). The alpha and beta chains form an alternating ring which encloses part of the gamma chain. CF(1) is attached to CF(0) by a central stalk formed by the gamma and epsilon chains, while a peripheral stalk is formed by the delta and b chains.

The protein localises to the cell inner membrane. The enzyme catalyses ATP + H2O + 4 H(+)(in) = ADP + phosphate + 5 H(+)(out). In terms of biological role, produces ATP from ADP in the presence of a proton gradient across the membrane. The catalytic sites are hosted primarily by the beta subunits. The sequence is that of ATP synthase subunit beta from Xanthomonas campestris pv. campestris (strain 8004).